The sequence spans 207 residues: Superoxide dismutase [Mn] (207 aa).

4 residues coordinate Mn(2+): H30, H78, D166, and H170.

Belongs to the iron/manganese superoxide dismutase family. Homodimer. The cofactor is Mn(2+).

It catalyses the reaction 2 superoxide + 2 H(+) = H2O2 + O2. In terms of biological role, destroys superoxide anion radicals which are normally produced within the cells and which are toxic to biological systems. This chain is Superoxide dismutase [Mn] (sodA), found in Chlamydia pneumoniae (Chlamydophila pneumoniae).